The sequence spans 121 residues: MARILIVDDSPTEMYKLTAMLEKHGHQVLKAENGGDGVALARQEKPDVVLMDIVMPGLNGFQATRQLTKDAETSAIPVIIVTTKDQETDKVWGKRQGARDYLTKPVDEETLLKTINAVLAG.

In terms of domain architecture, Response regulatory spans 3-119 (RILIVDDSPT…TLLKTINAVL (117 aa)). Position 52 is a 4-aspartylphosphate (D52).

Its function is as follows. May be a part of a signal-transduction system that regulates twitching motility by controlling pilus function (extension and retraction). The chain is Protein PilH (pilH) from Pseudomonas aeruginosa (strain ATCC 15692 / DSM 22644 / CIP 104116 / JCM 14847 / LMG 12228 / 1C / PRS 101 / PAO1).